The sequence spans 133 residues: Small ribosomal subunit protein uS8 (133 aa).

This sequence belongs to the universal ribosomal protein uS8 family. Part of the 30S ribosomal subunit. Contacts proteins S5 and S12.

One of the primary rRNA binding proteins, it binds directly to 16S rRNA central domain where it helps coordinate assembly of the platform of the 30S subunit. This Deinococcus geothermalis (strain DSM 11300 / CIP 105573 / AG-3a) protein is Small ribosomal subunit protein uS8.